The sequence spans 494 residues: GTPase Der (494 aa).

EngA-type G domains are found at residues 3 to 166 and 208 to 381; these read PVVA…VGEK and IKLA…ECAT. GTP is bound by residues 9 to 16, 56 to 60, 118 to 121, 214 to 221, 261 to 265, and 326 to 329; these read GRPNVGKS, DTGGI, NKTD, DTAGV, and NKWD. The region spanning 382 to 466 is the KH-like domain; sequence RRVNTSMLTK…PIRIQFKEGE (85 aa).

The protein belongs to the TRAFAC class TrmE-Era-EngA-EngB-Septin-like GTPase superfamily. EngA (Der) GTPase family. Associates with the 50S ribosomal subunit.

GTPase that plays an essential role in the late steps of ribosome biogenesis. The polypeptide is GTPase Der (Serratia proteamaculans (strain 568)).